The primary structure comprises 516 residues: Histidine ammonia-lyase 1 (516 aa).

The segment at residues 147–149 (SSG) is a cross-link (5-imidazolinone (Ser-Gly)). A 2,3-didehydroalanine (Ser) modification is found at Ser-148.

This sequence belongs to the PAL/histidase family. Post-translationally, contains an active site 4-methylidene-imidazol-5-one (MIO), which is formed autocatalytically by cyclization and dehydration of residues Ser-Ser-Gly.

It localises to the cytoplasm. The catalysed reaction is L-histidine = trans-urocanate + NH4(+). The protein operates within amino-acid degradation; L-histidine degradation into L-glutamate; N-formimidoyl-L-glutamate from L-histidine: step 1/3. This Fusobacterium nucleatum subsp. nucleatum (strain ATCC 25586 / DSM 15643 / BCRC 10681 / CIP 101130 / JCM 8532 / KCTC 2640 / LMG 13131 / VPI 4355) protein is Histidine ammonia-lyase 1 (hutH1).